A 191-amino-acid polypeptide reads, in one-letter code: Potassium-transporting ATPase KdpC subunit (191 aa).

Residues Ile10–Ala30 traverse the membrane as a helical segment.

This sequence belongs to the KdpC family. As to quaternary structure, the system is composed of three essential subunits: KdpA, KdpB and KdpC.

The protein resides in the cell inner membrane. Part of the high-affinity ATP-driven potassium transport (or Kdp) system, which catalyzes the hydrolysis of ATP coupled with the electrogenic transport of potassium into the cytoplasm. This subunit acts as a catalytic chaperone that increases the ATP-binding affinity of the ATP-hydrolyzing subunit KdpB by the formation of a transient KdpB/KdpC/ATP ternary complex. The polypeptide is Potassium-transporting ATPase KdpC subunit (Bacteroides fragilis (strain ATCC 25285 / DSM 2151 / CCUG 4856 / JCM 11019 / LMG 10263 / NCTC 9343 / Onslow / VPI 2553 / EN-2)).